The primary structure comprises 307 residues: Ribosomal RNA small subunit methyltransferase H (307 aa).

S-adenosyl-L-methionine is bound by residues 32–34, aspartate 52, phenylalanine 78, aspartate 100, and glutamine 107; that span reads GGH.

The protein belongs to the methyltransferase superfamily. RsmH family.

The protein localises to the cytoplasm. It catalyses the reaction cytidine(1402) in 16S rRNA + S-adenosyl-L-methionine = N(4)-methylcytidine(1402) in 16S rRNA + S-adenosyl-L-homocysteine + H(+). Specifically methylates the N4 position of cytidine in position 1402 (C1402) of 16S rRNA. The chain is Ribosomal RNA small subunit methyltransferase H from Coxiella burnetii (strain CbuK_Q154) (Coxiella burnetii (strain Q154)).